A 453-amino-acid chain; its full sequence is Bifunctional protein GlmU (453 aa).

The segment at 1–226 is pyrophosphorylase; sequence MKFSTVILAA…SIEVEGVNDR (226 aa). UDP-N-acetyl-alpha-D-glucosamine-binding positions include 8–11, lysine 22, glutamine 73, 78–79, 100–102, glycine 137, glutamate 151, asparagine 166, and asparagine 224; these read LAAG, GT, and YGD. Aspartate 102 lines the Mg(2+) pocket. Residue asparagine 224 coordinates Mg(2+). The linker stretch occupies residues 227–247; the sequence is IQLARLERAFQARQAKKLLEQ. Positions 248 to 453 are N-acetyltransferase; sequence GVMLRDPARF…AGWQRPAKKK (206 aa). UDP-N-acetyl-alpha-D-glucosamine contacts are provided by arginine 330 and lysine 348. Residue histidine 360 is the Proton acceptor of the active site. UDP-N-acetyl-alpha-D-glucosamine is bound by residues tyrosine 363 and asparagine 374. Acetyl-CoA contacts are provided by residues alanine 377, 383–384, serine 402, alanine 420, and arginine 437; that span reads NY.

It in the N-terminal section; belongs to the N-acetylglucosamine-1-phosphate uridyltransferase family. This sequence in the C-terminal section; belongs to the transferase hexapeptide repeat family. Homotrimer. Mg(2+) is required as a cofactor.

The protein localises to the cytoplasm. The enzyme catalyses alpha-D-glucosamine 1-phosphate + acetyl-CoA = N-acetyl-alpha-D-glucosamine 1-phosphate + CoA + H(+). It catalyses the reaction N-acetyl-alpha-D-glucosamine 1-phosphate + UTP + H(+) = UDP-N-acetyl-alpha-D-glucosamine + diphosphate. It functions in the pathway nucleotide-sugar biosynthesis; UDP-N-acetyl-alpha-D-glucosamine biosynthesis; N-acetyl-alpha-D-glucosamine 1-phosphate from alpha-D-glucosamine 6-phosphate (route II): step 2/2. The protein operates within nucleotide-sugar biosynthesis; UDP-N-acetyl-alpha-D-glucosamine biosynthesis; UDP-N-acetyl-alpha-D-glucosamine from N-acetyl-alpha-D-glucosamine 1-phosphate: step 1/1. Its pathway is bacterial outer membrane biogenesis; LPS lipid A biosynthesis. In terms of biological role, catalyzes the last two sequential reactions in the de novo biosynthetic pathway for UDP-N-acetylglucosamine (UDP-GlcNAc). The C-terminal domain catalyzes the transfer of acetyl group from acetyl coenzyme A to glucosamine-1-phosphate (GlcN-1-P) to produce N-acetylglucosamine-1-phosphate (GlcNAc-1-P), which is converted into UDP-GlcNAc by the transfer of uridine 5-monophosphate (from uridine 5-triphosphate), a reaction catalyzed by the N-terminal domain. The chain is Bifunctional protein GlmU from Vibrio cholerae serotype O1 (strain ATCC 39541 / Classical Ogawa 395 / O395).